A 208-amino-acid chain; its full sequence is MSVFEIKHPLVQHKISLMRAKDMSTRSFRQLSAEVGSLLTYEATKDLELENFQMEGWDGEITGQRLVGKKATVVPILRAGIGMLDGVLELMPSAKISVVGLYRDEETLEPVTYFEKLAGDIDQRLALIIDPMLATGGSMNATIDILKKAGCNDIRALVLVAAPEGIEKVKSAHPDVDIYTASIDDHLNESGYIIPGLGDAGDKIFGTK.

5-phospho-alpha-D-ribose 1-diphosphate contacts are provided by residues arginine 78, arginine 103, and 130–138 (DPMLATGGS). Residues isoleucine 193 and 198–200 (GDA) each bind uracil. Aspartate 199 is a binding site for 5-phospho-alpha-D-ribose 1-diphosphate.

This sequence belongs to the UPRTase family. Mg(2+) serves as cofactor.

It carries out the reaction UMP + diphosphate = 5-phospho-alpha-D-ribose 1-diphosphate + uracil. It participates in pyrimidine metabolism; UMP biosynthesis via salvage pathway; UMP from uracil: step 1/1. Allosterically activated by GTP. In terms of biological role, catalyzes the conversion of uracil and 5-phospho-alpha-D-ribose 1-diphosphate (PRPP) to UMP and diphosphate. The chain is Uracil phosphoribosyltransferase from Colwellia psychrerythraea (strain 34H / ATCC BAA-681) (Vibrio psychroerythus).